A 350-amino-acid chain; its full sequence is Phospho-2-dehydro-3-deoxyheptonate aldolase, Phe-sensitive (350 aa).

The residue at position 244 (Lys244) is an N6-acetyllysine.

The protein belongs to the class-I DAHP synthase family. As to quaternary structure, homotetramer.

It catalyses the reaction D-erythrose 4-phosphate + phosphoenolpyruvate + H2O = 7-phospho-2-dehydro-3-deoxy-D-arabino-heptonate + phosphate. It functions in the pathway metabolic intermediate biosynthesis; chorismate biosynthesis; chorismate from D-erythrose 4-phosphate and phosphoenolpyruvate: step 1/7. In terms of biological role, stereospecific condensation of phosphoenolpyruvate (PEP) and D-erythrose-4-phosphate (E4P) giving rise to 3-deoxy-D-arabino-heptulosonate-7-phosphate (DAHP). This is Phospho-2-dehydro-3-deoxyheptonate aldolase, Phe-sensitive (aroG) from Escherichia coli O157:H7.